The sequence spans 369 residues: Aminomethyltransferase (369 aa).

This sequence belongs to the GcvT family. The glycine cleavage system is composed of four proteins: P, T, L and H.

The catalysed reaction is N(6)-[(R)-S(8)-aminomethyldihydrolipoyl]-L-lysyl-[protein] + (6S)-5,6,7,8-tetrahydrofolate = N(6)-[(R)-dihydrolipoyl]-L-lysyl-[protein] + (6R)-5,10-methylene-5,6,7,8-tetrahydrofolate + NH4(+). Functionally, the glycine cleavage system catalyzes the degradation of glycine. The sequence is that of Aminomethyltransferase from Rippkaea orientalis (strain PCC 8801 / RF-1) (Cyanothece sp. (strain PCC 8801)).